Reading from the N-terminus, the 113-residue chain is Hydrogenase maturation factor HypA (113 aa).

H2 contacts Ni(2+). The Zn(2+) site is built by C73, C76, C89, and C92.

Belongs to the HypA/HybF family.

Involved in the maturation of [NiFe] hydrogenases. Required for nickel insertion into the metal center of the hydrogenase. In Xanthobacter autotrophicus (strain ATCC BAA-1158 / Py2), this protein is Hydrogenase maturation factor HypA.